Reading from the N-terminus, the 138-residue chain is MAKYNIGAVVAEFNYDITQMMLGLAKEEAKSRDCEITQVVTVPGVFDMALAIKKLLEKDEIDAVITLGAVIEGATDHDQIVAQHASRKIADLSLEYEKPVALGISGPGMTRLDAHKRVDYGKRAVEAAIKMCDRLNEI.

5-amino-6-(D-ribitylamino)uracil contacts are provided by residues Phe-13, 45–47, and 69–71; these read VFD and AVI. 74–75 is a binding site for (2S)-2-hydroxy-3-oxobutyl phosphate; that stretch reads AT. His-77 serves as the catalytic Proton donor. Leu-102 is a binding site for 5-amino-6-(D-ribitylamino)uracil. (2S)-2-hydroxy-3-oxobutyl phosphate is bound at residue Arg-117.

It belongs to the DMRL synthase family.

The catalysed reaction is (2S)-2-hydroxy-3-oxobutyl phosphate + 5-amino-6-(D-ribitylamino)uracil = 6,7-dimethyl-8-(1-D-ribityl)lumazine + phosphate + 2 H2O + H(+). It participates in cofactor biosynthesis; riboflavin biosynthesis; riboflavin from 2-hydroxy-3-oxobutyl phosphate and 5-amino-6-(D-ribitylamino)uracil: step 1/2. Catalyzes the formation of 6,7-dimethyl-8-ribityllumazine by condensation of 5-amino-6-(D-ribitylamino)uracil with 3,4-dihydroxy-2-butanone 4-phosphate. This is the penultimate step in the biosynthesis of riboflavin. This chain is 6,7-dimethyl-8-ribityllumazine synthase, found in Methanobrevibacter smithii (strain ATCC 35061 / DSM 861 / OCM 144 / PS).